Reading from the N-terminus, the 132-residue chain is L-ectoine synthase (132 aa).

It belongs to the ectoine synthase family.

The catalysed reaction is (2S)-4-acetamido-2-aminobutanoate = L-ectoine + H2O. The protein operates within amine and polyamine biosynthesis; ectoine biosynthesis; L-ectoine from L-aspartate 4-semialdehyde: step 3/3. In terms of biological role, catalyzes the circularization of gamma-N-acetyl-alpha,gamma-diaminobutyric acid (ADABA) to ectoine (1,4,5,6-tetrahydro-2-methyl-4-pyrimidine carboxylic acid), which is an excellent osmoprotectant. The chain is L-ectoine synthase from Rhodococcus erythropolis (strain PR4 / NBRC 100887).